The chain runs to 535 residues: Putative beta-glucosidase 41 (535 aa).

An N-terminal signal peptide occupies residues 1-27 (MESLMRLVLVLFPFFVVFFVPLDHVSS). A beta-D-glucoside is bound at residue Gln-49. Asn-118 carries an N-linked (GlcNAc...) asparagine glycan. A beta-D-glucoside is bound by residues His-151 and 196 to 197 (NE). Glu-197 functions as the Proton donor in the catalytic mechanism. An intrachain disulfide couples Cys-216 to Cys-224. Positions 340 and 413 each coordinate a beta-D-glucoside. Residue Glu-413 is the Nucleophile of the active site. The N-linked (GlcNAc...) asparagine glycan is linked to Asn-445. Residues Trp-463, 470 to 471 (EW), and Phe-479 each bind a beta-D-glucoside. An N-linked (GlcNAc...) asparagine glycan is attached at Asn-489.

This sequence belongs to the glycosyl hydrolase 1 family.

The enzyme catalyses Hydrolysis of terminal, non-reducing beta-D-glucosyl residues with release of beta-D-glucose.. The sequence is that of Putative beta-glucosidase 41 from Arabidopsis thaliana (Mouse-ear cress).